A 419-amino-acid chain; its full sequence is Serine--tRNA ligase (419 aa).

L-serine is bound at residue 226-228 (TSE). ATP is bound by residues 257–259 (RRE) and Val273. L-serine is bound at residue Glu280. 344-347 (ELTS) provides a ligand contact to ATP. Thr379 contributes to the L-serine binding site.

This sequence belongs to the class-II aminoacyl-tRNA synthetase family. Type-1 seryl-tRNA synthetase subfamily. In terms of assembly, homodimer. The tRNA molecule binds across the dimer.

Its subcellular location is the cytoplasm. It carries out the reaction tRNA(Ser) + L-serine + ATP = L-seryl-tRNA(Ser) + AMP + diphosphate + H(+). It catalyses the reaction tRNA(Sec) + L-serine + ATP = L-seryl-tRNA(Sec) + AMP + diphosphate + H(+). It functions in the pathway aminoacyl-tRNA biosynthesis; selenocysteinyl-tRNA(Sec) biosynthesis; L-seryl-tRNA(Sec) from L-serine and tRNA(Sec): step 1/1. Functionally, catalyzes the attachment of serine to tRNA(Ser). Is also able to aminoacylate tRNA(Sec) with serine, to form the misacylated tRNA L-seryl-tRNA(Sec), which will be further converted into selenocysteinyl-tRNA(Sec). This Mycobacterium marinum (strain ATCC BAA-535 / M) protein is Serine--tRNA ligase.